Reading from the N-terminus, the 360-residue chain is Photosystem II protein D1 2 (360 aa).

Helical transmembrane passes span 29 to 46 (YIGWFGVLMIPTLLTAVT), 118 to 133 (HYMIGCICYLGRQWEY), and 142 to 156 (WICVAYSAPLAATYS). Residue H118 participates in chlorophyll a binding. Position 126 (Y126) interacts with pheophytin a. D170 and E189 together coordinate [CaMn4O5] cluster. The helical transmembrane segment at 197 to 218 (FHMFGVAGVLGGSLFAAMHGSL) threads the bilayer. Chlorophyll a is bound at residue H198. Residues H215 and 264 to 265 (SF) each bind a quinone. Fe cation is bound at residue H215. H272 is a binding site for Fe cation. A helical membrane pass occupies residues 274-288 (FLGAWPVVCIWLTAM). Positions 332, 333, 342, and 344 each coordinate [CaMn4O5] cluster. Positions 345–360 (AGESAPVALTAPVING) are excised as a propeptide.

This sequence belongs to the reaction center PufL/M/PsbA/D family. In terms of assembly, PSII is composed of 1 copy each of membrane proteins PsbA, PsbB, PsbC, PsbD, PsbE, PsbF, PsbH, PsbI, PsbJ, PsbK, PsbL, PsbM, PsbT, PsbX, PsbY, PsbZ, Psb30/Ycf12, peripheral proteins PsbO, CyanoQ (PsbQ), PsbU, PsbV and a large number of cofactors. It forms dimeric complexes. Requires The D1/D2 heterodimer binds P680, chlorophylls that are the primary electron donor of PSII, and subsequent electron acceptors. It shares a non-heme iron and each subunit binds pheophytin, quinone, additional chlorophylls, carotenoids and lipids. D1 provides most of the ligands for the Mn4-Ca-O5 cluster of the oxygen-evolving complex (OEC). There is also a Cl(-1) ion associated with D1 and D2, which is required for oxygen evolution. The PSII complex binds additional chlorophylls, carotenoids and specific lipids. as cofactor. Tyr-161 forms a radical intermediate that is referred to as redox-active TyrZ, YZ or Y-Z. In terms of processing, C-terminally processed by CtpA; processing is essential to allow assembly of the oxygen-evolving complex and thus photosynthetic growth.

The protein resides in the cellular thylakoid membrane. It catalyses the reaction 2 a plastoquinone + 4 hnu + 2 H2O = 2 a plastoquinol + O2. Photosystem II (PSII) is a light-driven water:plastoquinone oxidoreductase that uses light energy to abstract electrons from H(2)O, generating O(2) and a proton gradient subsequently used for ATP formation. It consists of a core antenna complex that captures photons, and an electron transfer chain that converts photonic excitation into a charge separation. The D1/D2 (PsbA/PsbD) reaction center heterodimer binds P680, the primary electron donor of PSII as well as several subsequent electron acceptors. The polypeptide is Photosystem II protein D1 2 (Acaryochloris marina (strain MBIC 11017)).